The sequence spans 180 residues: MSKKNTDISKFLSYILRHQPEAIGLSLDKEGWVVISDLILCAAEEGYIFDNNLIHSIVNNSDKKRFTISDDGLRIRAAQGHSTQQVDIRYEAKIPPEFLYHGTATRFIISIRVQGLNAKDRQYVHLSADEETAIQVGSRHGKPIVLRIKALTMYEQGFYFYQAANGVWLSNSIPYQFIQE.

This sequence belongs to the KptA/TPT1 family.

Removes the 2'-phosphate from RNA via an intermediate in which the phosphate is ADP-ribosylated by NAD followed by a presumed transesterification to release the RNA and generate ADP-ribose 1''-2''-cyclic phosphate (APPR&gt;P). May function as an ADP-ribosylase. The protein is Probable RNA 2'-phosphotransferase of Pectobacterium atrosepticum (strain SCRI 1043 / ATCC BAA-672) (Erwinia carotovora subsp. atroseptica).